Reading from the N-terminus, the 359-residue chain is Probable dual-specificity RNA methyltransferase RlmN (359 aa).

E100 serves as the catalytic Proton acceptor. Residues 106 to 340 (TDKRLTVCVS…VSVRASRGRD (235 aa)) form the Radical SAM core domain. C113 and C345 form a disulfide bridge. 3 residues coordinate [4Fe-4S] cluster: C120, C124, and C127. Residues 167 to 168 (GE), S197, 226 to 228 (SLH), and N302 contribute to the S-adenosyl-L-methionine site. Catalysis depends on C345, which acts as the S-methylcysteine intermediate.

This sequence belongs to the radical SAM superfamily. RlmN family. The cofactor is [4Fe-4S] cluster.

It localises to the cytoplasm. It catalyses the reaction adenosine(2503) in 23S rRNA + 2 reduced [2Fe-2S]-[ferredoxin] + 2 S-adenosyl-L-methionine = 2-methyladenosine(2503) in 23S rRNA + 5'-deoxyadenosine + L-methionine + 2 oxidized [2Fe-2S]-[ferredoxin] + S-adenosyl-L-homocysteine. The catalysed reaction is adenosine(37) in tRNA + 2 reduced [2Fe-2S]-[ferredoxin] + 2 S-adenosyl-L-methionine = 2-methyladenosine(37) in tRNA + 5'-deoxyadenosine + L-methionine + 2 oxidized [2Fe-2S]-[ferredoxin] + S-adenosyl-L-homocysteine. In terms of biological role, specifically methylates position 2 of adenine 2503 in 23S rRNA and position 2 of adenine 37 in tRNAs. The chain is Probable dual-specificity RNA methyltransferase RlmN from Prochlorococcus marinus (strain NATL1A).